We begin with the raw amino-acid sequence, 175 residues long: MHQVVCATTNPAKIQAILQAFHEIFGEGSCHIASVAVESGVPEQPFGSEETRAGARNRVANARRLLPEADFWVAIEAGIDGDSTFSWVVIENTSQRGEARSATLPLPAVILEKVREGEALGPVMSRYTGIDEIGRKEGAIGVFTAGKLTRTSVYHQAVILALSPFHNAVYQPLQA.

8–13 (TTNPAK) serves as a coordination point for substrate. Glu-38 and Glu-68 together coordinate Mg(2+). 68-69 (EA) lines the substrate pocket.

The protein belongs to the YjjX NTPase family. In terms of assembly, homodimer. The cofactor is Mg(2+). It depends on Mn(2+) as a cofactor.

It catalyses the reaction XTP + H2O = XDP + phosphate + H(+). It carries out the reaction ITP + H2O = IDP + phosphate + H(+). In terms of biological role, phosphatase that hydrolyzes non-canonical purine nucleotides such as XTP and ITP to their respective diphosphate derivatives. Probably excludes non-canonical purines from DNA/RNA precursor pool, thus preventing their incorporation into DNA/RNA and avoiding chromosomal lesions. This is Inosine/xanthosine triphosphatase (yjjX) from Escherichia coli O127:H6 (strain E2348/69 / EPEC).